A 261-amino-acid chain; its full sequence is MICOS complex subunit Mic25 (261 aa).

A lipid anchor (N-myristoyl glycine) is attached at Gly2. Phosphoserine is present on residues Ser13, Ser31, and Ser33. Disordered stretches follow at residues 39–59, 81–114, and 140–165; these read KDCS…PECS, CGPA…VKED, and TEKH…RLTR. Residues 109 to 202 are a coiled coil; the sequence is SAVKEDLKKF…AELYKLSSQQ (94 aa). Residues 154–165 show a composition bias toward basic and acidic residues; the sequence is THEQQQSDRLTR. The 42-residue stretch at 220 to 261 folds into the CHCH domain; sequence EPVCSGLQAQILRCYRDHLHEVLLCSDLAKAYQHCVSTARKG. 2 short sequence motifs (cx9C motif) span residues 223–233 and 244–254; these read CSGLQAQILRC and CSDLAKAYQHC. 2 disulfide bridges follow: Cys223/Cys254 and Cys233/Cys244.

Belongs to the MICOS complex subunit Mic19 family. Metazoan Mic25 subfamily. In terms of assembly, component of the mitochondrial contact site and cristae organizing system (MICOS) complex, composed of at least MICOS10/MIC10, CHCHD3/MIC19, CHCHD6/MIC25, APOOL/MIC27, IMMT/MIC60, APOO/MIC23/MIC26 and MICOS13/MIC13. This complex was also known under the names MINOS or MitOS complex. The MICOS complex associates with mitochondrial outer membrane proteins SAMM50, MTX1 and MTX2 (together described as components of the mitochondrial outer membrane sorting assembly machinery (SAM) complex) and DNAJC11, mitochondrial inner membrane protein TMEM11 and with HSPA9. The MICOS and SAM complexes together with DNAJC11 are part of a large protein complex spanning both membranes termed the mitochondrial intermembrane space bridging (MIB) complex. Interacts with DISC1. Interacts with IMMT/MIC60.

It is found in the mitochondrion inner membrane. The protein localises to the mitochondrion. Functionally, component of the MICOS complex, a large protein complex of the mitochondrial inner membrane that plays crucial roles in the maintenance of crista junctions, inner membrane architecture, and formation of contact sites to the outer membrane. This is MICOS complex subunit Mic25 (Chchd6) from Rattus norvegicus (Rat).